A 195-amino-acid polypeptide reads, in one-letter code: Probable GTP-binding protein EngB (195 aa).

The EngB-type G domain occupies 22-195 (QLPEIALAGR…WSALSRYIKR (174 aa)). GTP is bound by residues 30–37 (GRSNVGKS), 57–61 (GKTQT), 75–78 (DVPG), 142–145 (TKLD), and 174–176 (FSA). 2 residues coordinate Mg(2+): Ser-37 and Thr-59.

This sequence belongs to the TRAFAC class TrmE-Era-EngA-EngB-Septin-like GTPase superfamily. EngB GTPase family. The cofactor is Mg(2+).

Functionally, necessary for normal cell division and for the maintenance of normal septation. This Oceanobacillus iheyensis (strain DSM 14371 / CIP 107618 / JCM 11309 / KCTC 3954 / HTE831) protein is Probable GTP-binding protein EngB.